A 169-amino-acid polypeptide reads, in one-letter code: Non-specific lipid transfer protein GPI-anchored 11 (169 aa).

The signal sequence occupies residues 1–23 (MAYATILMIFSVVALMSGERAHA). 4 disulfides stabilise this stretch: cysteine 27/cysteine 70, cysteine 37/cysteine 54, cysteine 55/cysteine 95, and cysteine 68/cysteine 105. A lipid anchor (GPI-anchor amidated serine) is attached at serine 146. The propeptide at 147–169 (SDASLLSVSFAFVIFMALISSFY) is removed in mature form.

This sequence belongs to the plant LTP family. Expressed in a vascular-specific manner, mainly in roots, and, to a lower extent, in hypocotyls, seedlings stems and flowers.

The protein resides in the cell membrane. Its subcellular location is the secreted. Functionally, probable lipid transfer protein. Proteoglycan-like factor that exhibits xylogen activity consisting in mediating local and inductive cell-cell interactions required for xylem differentiation. This Arabidopsis thaliana (Mouse-ear cress) protein is Non-specific lipid transfer protein GPI-anchored 11.